Here is a 949-residue protein sequence, read N- to C-terminus: Coiled-coil domain-containing protein 80 (949 aa).

Positions 1–22 are cleaved as a signal peptide; sequence MMWKMGPHFTTLLAMWLVCGSA. Disordered regions lie at residues 24–79, 112–132, and 289–610; these read HSPA…RRKS, SSAR…MLRF, and HVVQ…PKKS. Basic and acidic residues predominate over residues 112–123; that stretch reads SSAREMVRDEGS. Over residues 295 to 307 the composition is skewed to gly residues; it reads NEGGGGAGGTGLG. Over residues 308–328 the composition is skewed to basic and acidic residues; sequence GDKRKEDPRRTQVHPTREAPR. Over residues 345–380 the composition is skewed to low complexity; the sequence is RATTLPPAPVTTATRATSRVVTIAARPTTTTAYPAT. The segment covering 419-429 has biased composition (basic and acidic residues); that stretch reads PRKEQQREKPQ. Residues 436–445 are compositionally biased toward polar residues; the sequence is KATNYGSFTA. The segment covering 463-477 has biased composition (basic and acidic residues); the sequence is RFRDNRTDKREHGHQ. Residue N467 is glycosylated (N-linked (GlcNAc...) asparagine). The span at 487–498 shows a compositional bias: basic residues; sequence KPVKGKLPKKKD. Composition is skewed to basic and acidic residues over residues 499–510, 534–548, and 556–581; these read RILSNEYEDKYD, KESK…PEKE, and AKQD…EKDK. Residues K544 and K547 each participate in a glycyl lysine isopeptide (Lys-Gly) (interchain with G-Cter in SUMO2) cross-link. Residues 554–587 adopt a coiled-coil conformation; it reads KSAKQDKLLKSEKQAKKAEKKTKQEKDKNKKKKA.

The protein belongs to the CCDC80 family. As to quaternary structure, binds to various extracellular matrix proteins. Post-translationally, phosphorylated. Expressed in brain, stomach, colon, rectum, liver, lung, kidney, adipocytes and testis.

The protein resides in the secreted. It localises to the extracellular space. Its subcellular location is the extracellular matrix. In terms of biological role, promotes cell adhesion and matrix assembly. This is Coiled-coil domain-containing protein 80 (Ccdc80) from Mus musculus (Mouse).